The primary structure comprises 566 residues: Proline--tRNA ligase (566 aa).

The protein belongs to the class-II aminoacyl-tRNA synthetase family. ProS type 1 subfamily. As to quaternary structure, homodimer.

Its subcellular location is the cytoplasm. It carries out the reaction tRNA(Pro) + L-proline + ATP = L-prolyl-tRNA(Pro) + AMP + diphosphate. In terms of biological role, catalyzes the attachment of proline to tRNA(Pro) in a two-step reaction: proline is first activated by ATP to form Pro-AMP and then transferred to the acceptor end of tRNA(Pro). As ProRS can inadvertently accommodate and process non-cognate amino acids such as alanine and cysteine, to avoid such errors it has two additional distinct editing activities against alanine. One activity is designated as 'pretransfer' editing and involves the tRNA(Pro)-independent hydrolysis of activated Ala-AMP. The other activity is designated 'posttransfer' editing and involves deacylation of mischarged Ala-tRNA(Pro). The misacylated Cys-tRNA(Pro) is not edited by ProRS. The polypeptide is Proline--tRNA ligase (Shouchella clausii (strain KSM-K16) (Alkalihalobacillus clausii)).